A 1220-amino-acid polypeptide reads, in one-letter code: DNA polymerase catalytic subunit (1220 aa).

The protein belongs to the DNA polymerase type-B family. Forms a complex with the ssDNA-binding protein, the DNA polymerase processivity factor, and the alkaline exonuclease. Interacts with the helicase-primase complex composed of the primase, the helicase and the primase-associated factor; this interaction may coordinate leading and lagging strand DNA synthesis at the replication fork.

It localises to the host nucleus. The catalysed reaction is DNA(n) + a 2'-deoxyribonucleoside 5'-triphosphate = DNA(n+1) + diphosphate. It carries out the reaction Endonucleolytic cleavage to 5'-phosphomonoester.. Its function is as follows. Replicates viral genomic DNA. The replication complex is composed of six viral proteins: the DNA polymerase, processivity factor, primase, primase-associated factor, helicase, and ssDNA-binding protein. Additionally, the polymerase contains an intrinsic ribonuclease H (RNase H) activity that specifically degrades RNA/DNA heteroduplexes or duplex DNA substrates in the 5' to 3' direction. Therefore, it can catalyze the excision of the RNA primers that initiate the synthesis of Okazaki fragments at a replication fork during viral DNA replication. The protein is DNA polymerase catalytic subunit (MDV043) of Gallid herpesvirus 2 (strain Chicken/Md5/ATCC VR-987) (GaHV-2).